Reading from the N-terminus, the 690-residue chain is Xylosyl- and glucuronyltransferase LARGE2 (690 aa).

At 1 to 8 (MLPRGRPR) the chain is on the cytoplasmic side. A helical; Signal-anchor for type II membrane protein membrane pass occupies residues 9 to 29 (AMGAAVLLLLLLLVVGFFLFG). The Lumenal segment spans residues 30–690 (RDPDYGLGTT…TALQQARSRA (661 aa)). N-linked (GlcNAc...) asparagine glycosylation is found at Asn51 and Asn78. Residues 68–343 (LHVAIVCAGY…FLGYDGKLLR (276 aa)) are xylosyltransferase activity. Asp172 and Asp174 together coordinate Mn(2+). Asn202 carries N-linked (GlcNAc...) asparagine glycosylation. Residues 344 to 686 (RELFGCPNQF…LKYLTALQQA (343 aa)) form a glucuronyltransferase activity region. Mn(2+)-binding residues include Asp492 and Asp494.

It in the C-terminal section; belongs to the glycosyltransferase 49 family. This sequence in the N-terminal section; belongs to the glycosyltransferase 8 family. The protein belongs to the glycosyltransferase 8 family. Interacts with B4GAT1. Mn(2+) serves as cofactor. As to expression, highly expressed in the testis and kidney, but weakly expressed in the heart and brain. Expressed during embryogenesis from 7 dpc.

It localises to the golgi apparatus membrane. The enzyme catalyses 3-O-[beta-D-GlcA-(1-&gt;3)-beta-D-Xyl-(1-&gt;4)-Rib-ol-P-Rib-ol-P-3-beta-D-GalNAc-(1-&gt;3)-beta-D-GlcNAc-(1-&gt;4)-(O-6-P-alpha-D-Man)]-Thr-[protein] + UDP-alpha-D-xylose = 3-O-[alpha-D-Xyl-(1-&gt;3)-beta-D-GlcA-(1-&gt;4)-beta-D-Xyl-(1-&gt;4)-Rib-ol-P-Rib-ol-P-3-beta-D-GalNAc-(1-&gt;3)-beta-D-GlcNAc-(1-&gt;4)-(O-6-P-alpha-D-Man)]-Thr-[protein] + UDP + H(+). The catalysed reaction is 3-O-{(1-&gt;[3)-alpha-D-Xyl-(1-&gt;3)-beta-D-GlcA-(1-&gt;](n)-4)-beta-D-Xyl-(1-&gt;4)-Rib-ol-P-Rib-ol-P-3-beta-D-GalNAc-(1-&gt;3)-beta-D-GlcNAc-(1-&gt;4)-O-6-P-alpha-D-Man}-L-Thr-[protein] + UDP-alpha-D-glucuronate = 3-O-{beta-D-GlcA-(1-&gt;[3)-alpha-D-Xyl-(1-&gt;3)-beta-D-GlcA-(1-&gt;](n)-4)-beta-D-Xyl-(1-&gt;4)-Rib-ol-P-Rib-ol-P-3-beta-D-GalNAc-(1-&gt;3)-beta-D-GlcNAc-(1-&gt;4)-O-6-P-alpha-D-Man}-L-Thr-[protein] + UDP + H(+). It carries out the reaction 3-O-{beta-D-GlcA-(1-&gt;[3)-alpha-D-Xyl-(1-&gt;3)-beta-D-GlcA-(1-&gt;](n)-4)-beta-D-Xyl-(1-&gt;4)-Rib-ol-P-Rib-ol-P-3-beta-D-GalNAc-(1-&gt;3)-beta-D-GlcNAc-(1-&gt;4)-O-6-P-alpha-D-Man}-L-Thr-[protein] + UDP-alpha-D-xylose = 3-O-{(1-&gt;[3)-alpha-D-Xyl-(1-&gt;3)-beta-D-GlcA-(1-&gt;](n+1)-4)-beta-D-Xyl-(1-&gt;4)-Rib-ol-P-Rib-ol-P-3-beta-D-GalNAc-(1-&gt;3)-beta-D-GlcNAc-(1-&gt;4)-O-6-P-alpha-D-Man}-L-Thr-[protein] + UDP + H(+). It participates in protein modification; protein glycosylation. In terms of biological role, bifunctional glycosyltransferase with both alpha-1,3-xylosyltransferase and beta-1,3-glucuronyltransferase activities involved in the maturation of alpha-dystroglycan (DAG1) by glycosylation leading to DAG1 binding to laminin G-like domain-containing extracellular proteins with high affinity and in a phosphorylated-O-mannosyl trisaccharide dependent manner. Elongates the glucuronyl-beta-1,4-xylose-beta disaccharide primer structure by adding repeating units [-3-Xylose-alpha-1,3-GlcA-beta-1-] to produce a heteropolysaccharide. Supports the maturation of DAG1 more effectively than LARGE1. In addition, can modify both heparan sulfate (HS)- and chondroitin/dermatan sulfate (CS/DS)-proteoglycans (PGs), namely GPC4, with a glycosaminoglycan (GAG)-like polysaccharide composed of xylose and glucuronic acid to confer laminin binding. This Mus musculus (Mouse) protein is Xylosyl- and glucuronyltransferase LARGE2.